The following is a 466-amino-acid chain: Argininosuccinate lyase (466 aa).

This sequence belongs to the lyase 1 family. Argininosuccinate lyase subfamily.

The protein resides in the cytoplasm. It carries out the reaction 2-(N(omega)-L-arginino)succinate = fumarate + L-arginine. The protein operates within amino-acid biosynthesis; L-arginine biosynthesis; L-arginine from L-ornithine and carbamoyl phosphate: step 3/3. The chain is Argininosuccinate lyase from Ehrlichia ruminantium (strain Gardel).